We begin with the raw amino-acid sequence, 564 residues long: Proline--tRNA ligase (564 aa).

Belongs to the class-II aminoacyl-tRNA synthetase family. ProS type 1 subfamily. Homodimer.

It localises to the cytoplasm. The catalysed reaction is tRNA(Pro) + L-proline + ATP = L-prolyl-tRNA(Pro) + AMP + diphosphate. In terms of biological role, catalyzes the attachment of proline to tRNA(Pro) in a two-step reaction: proline is first activated by ATP to form Pro-AMP and then transferred to the acceptor end of tRNA(Pro). As ProRS can inadvertently accommodate and process non-cognate amino acids such as alanine and cysteine, to avoid such errors it has two additional distinct editing activities against alanine. One activity is designated as 'pretransfer' editing and involves the tRNA(Pro)-independent hydrolysis of activated Ala-AMP. The other activity is designated 'posttransfer' editing and involves deacylation of mischarged Ala-tRNA(Pro). The misacylated Cys-tRNA(Pro) is not edited by ProRS. This chain is Proline--tRNA ligase, found in Xanthomonas axonopodis pv. citri (strain 306).